Reading from the N-terminus, the 213-residue chain is Small ribosomal subunit protein uS3 (213 aa).

Residues 38 to 106 (IREYLENRLS…RVHINIVEIK (69 aa)) form the KH type-2 domain.

It belongs to the universal ribosomal protein uS3 family. In terms of assembly, part of the 30S ribosomal subunit. Forms a tight complex with proteins S10 and S14.

Its function is as follows. Binds the lower part of the 30S subunit head. Binds mRNA in the 70S ribosome, positioning it for translation. The polypeptide is Small ribosomal subunit protein uS3 (Oceanobacillus iheyensis (strain DSM 14371 / CIP 107618 / JCM 11309 / KCTC 3954 / HTE831)).